A 381-amino-acid polypeptide reads, in one-letter code: 2-oxoglutarate-dependent dioxygenase FGSG_00048 (381 aa).

Belongs to the iron/ascorbate-dependent oxidoreductase family. Fe(2+) is required as a cofactor.

It participates in mycotoxin biosynthesis. In terms of biological role, 2-oxoglutarate-dependent dioxygenase; part of the gene cluster that mediates the biosynthesis of gramillins A and B, bicyclic lipopeptides that induce cell death in maize leaves but not in wheat leaves. The nonribosomal peptide synthetase GRA1 incorporates respectively a glutamic adic (Glu), a leucine (Leu), a serine (Ser), a hydroxyglutamine (HOGln), a 2-amino decanoic acid, and 2 cysteins (CysB and CysA). The biosynthesis of 2-amino decanoic acid incorporated in gramillins could be initiated by a fatty acid synthase composed of the alpha and beta subunits FGSG_00036 and FGSG_11656. The cytochrome P450 monooxygenase FGSG_15680 could hydroxylate the fatty acid chain. Subsequent oxidation to the ketone by the oxidoreductase FGSG_00048 and transamination by aminotransferase FGSG_00049 could form 2-amino-decanoic acid. On the other hand, FGSG_15680 could also be responsible for the HO-modified glutamine at the gamma-position. Whether hydroxylation occurs on the fully assembled product or on the Gln residue prior to assembly into the gramillins requires further proof. The thioredoxin FGSG_00043 could also be required for the disulfide-bond formation between CysA and CysB. The specific involvement of the remaining proteins from the cluster is more difficult to discern, but could have broader regulatory (FGSG_00040 and FGSG_11657) or enzymatic functions (FGSG_00044 and FGSG_00045). The final C-domain of GRA1 does not possess the expected sequence of a termination CT domain, often implicated in macrocyclization and release of a cyclopeptidein fungal NRPs; and the thioesterase FGSG_00047 may act in concert with the terminal C-domain of GRA1 to catalyze the formation of the macrocyclic anhydride and release of the products. The sequence is that of 2-oxoglutarate-dependent dioxygenase FGSG_00048 from Gibberella zeae (strain ATCC MYA-4620 / CBS 123657 / FGSC 9075 / NRRL 31084 / PH-1) (Wheat head blight fungus).